Here is a 282-residue protein sequence, read N- to C-terminus: Elongation factor Ts (282 aa).

An involved in Mg(2+) ion dislocation from EF-Tu region spans residues 80–83; sequence TDFV.

The protein belongs to the EF-Ts family.

The protein localises to the cytoplasm. Its function is as follows. Associates with the EF-Tu.GDP complex and induces the exchange of GDP to GTP. It remains bound to the aminoacyl-tRNA.EF-Tu.GTP complex up to the GTP hydrolysis stage on the ribosome. The chain is Elongation factor Ts (tsf) from Chlamydia trachomatis serovar D (strain ATCC VR-885 / DSM 19411 / UW-3/Cx).